The primary structure comprises 271 residues: Mannosyl-3-phosphoglycerate phosphatase (271 aa).

D13 acts as the Nucleophile in catalysis. 3 residues coordinate Mg(2+): D13, D15, and D214.

Belongs to the HAD-like hydrolase superfamily. MPGP family. Mg(2+) serves as cofactor.

It is found in the cytoplasm. The enzyme catalyses 2-O-(alpha-D-mannosyl)-3-phosphoglycerate + H2O = (2R)-2-O-(alpha-D-mannosyl)-glycerate + phosphate. This is Mannosyl-3-phosphoglycerate phosphatase (yedP) from Escherichia coli O6:K15:H31 (strain 536 / UPEC).